A 752-amino-acid chain; its full sequence is ATP-dependent RNA helicase DRS1 (752 aa).

Disordered regions lie at residues 1–61 (MVVG…NLDE) and 119–223 (GLVK…TEGD). Acidic residues predominate over residues 19–34 (DSEDDVPILDSSDDEK). A compositionally biased stretch (basic residues) spans 40-51 (TTKKRKGKNNKK). The span at 124–142 (AHIDSKQEEETEKEKVEKE) shows a compositional bias: basic and acidic residues. Acidic residues-rich tracts occupy residues 167–191 (NQSEEEEEEEEKEEEEEEEEEQEEM) and 200–209 (DEIDEEDDSE). Serine 208 is modified (phosphoserine). The Q motif motif lies at 231-259 (ENFNSLSLSRPVLKGLASLGYVKPSPIQS). Residues 262–437 (IPIALLGKDI…SLSLKKPVRI (176 aa)) form the Helicase ATP-binding domain. 275–282 (AVTGSGKT) contributes to the ATP binding site. A DEAD box motif is present at residues 385–388 (DEAD). The Helicase C-terminal domain maps to 448–639 (KLTQEFVRIR…SMNDTIEDIL (192 aa)). The stretch at 621-667 (IEETNKLVESMNDTIEDILVEEKEEKEILRAEMQLRKGENMLKHKKE) forms a coiled coil. Residues 673-752 (RRTWFQSESD…NKKKGFKSRR (80 aa)) form a disordered region. Residues 694-705 (RNKKVTNSKKRK) show a composition bias toward basic residues. The span at 722–734 (TKTDRIADQERTF) shows a compositional bias: basic and acidic residues. The segment covering 735 to 752 (KKQKSTNSNKKKGFKSRR) has biased composition (basic residues).

The protein belongs to the DEAD box helicase family. DDX27/DRS1 subfamily. As to quaternary structure, interacts with RRP1 and associates with pre-ribosomal particles.

It localises to the nucleus. Its subcellular location is the nucleolus. It catalyses the reaction ATP + H2O = ADP + phosphate + H(+). In terms of biological role, ATP-binding RNA helicase involved in ribosome assembly. In Saccharomyces cerevisiae (strain ATCC 204508 / S288c) (Baker's yeast), this protein is ATP-dependent RNA helicase DRS1 (DRS1).